We begin with the raw amino-acid sequence, 458 residues long: Mitochondrial distribution and morphology protein 10 (458 aa).

A disordered region spans residues 307–339 (LDQRRTEPLDAPNTNSSVFSKERVQKKQGPKED). Residues 326–339 (SKERVQKKQGPKED) are compositionally biased toward basic and acidic residues.

It belongs to the MDM10 family. In terms of assembly, component of the ER-mitochondria encounter structure (ERMES) or MDM complex, composed of MMM1, MDM10, MDM12 and MDM34. Associates with the mitochondrial outer membrane sorting assembly machinery SAM(core) complex.

The protein localises to the mitochondrion outer membrane. Functionally, component of the ERMES/MDM complex, which serves as a molecular tether to connect the endoplasmic reticulum and mitochondria. Components of this complex are involved in the control of mitochondrial shape and protein biogenesis and may function in phospholipid exchange. MDM10 is involved in the late assembly steps of the general translocase of the mitochondrial outer membrane (TOM complex). Functions in the TOM40-specific route of the assembly of outer membrane beta-barrel proteins, including the association of TOM40 with the receptor TOM22 and small TOM proteins. Can associate with the SAM(core) complex as well as the MDM12-MMM1 complex, both involved in late steps of the major beta-barrel assembly pathway, that is responsible for biogenesis of all outer membrane beta-barrel proteins. May act as a switch that shuttles between both complexes and channels precursor proteins into the TOM40-specific pathway. Plays a role in mitochondrial morphology and in the inheritance of mitochondria. This is Mitochondrial distribution and morphology protein 10 from Lachancea thermotolerans (strain ATCC 56472 / CBS 6340 / NRRL Y-8284) (Yeast).